A 2442-amino-acid chain; its full sequence is Piezo-type mechanosensitive ion channel component 1 (2442 aa).

The Extracellular portion of the chain corresponds to 1 to 5 (MTVPP). Residues 6–26 (LLKSCVVKLLLPAALLAAAII) traverse the membrane as a helical segment. Arg27 is a topological domain (cytoplasmic). The helical transmembrane segment at 28–48 (PSFLSIGYVLLALVSAVLPPI) threads the bilayer. Residues 49-56 (RKSLALPK) are Extracellular-facing. The chain crosses the membrane as a helical span at residues 57–77 (LVGTFVIITFLFCLAVALGVG). Residues 78–122 (SYQISEQVVHKNDRTYICNRSDTTLFRSIGLVRFHPTGTFESTRA) lie on the Cytoplasmic side of the membrane. A helical membrane pass occupies residues 123–143 (FLPEIIATSAALLTIIIVMFL). The Extracellular portion of the chain corresponds to 144 to 173 (SHRDEQLDVVGDVVTVRSESGREQRRQRKL). Residues 174–196 (AAIMWSAIGNSLRRLTNFVLFLF) traverse the membrane as a helical segment. The Cytoplasmic portion of the chain corresponds to 197–198 (TA). A helical transmembrane segment spans residues 199–219 (YVGIVKPSLSNSIYFLAFLFI). At 220–239 (STWWSTYTPLRHGVYNQIKK) the chain is on the extracellular side. The helical transmembrane segment at 240 to 260 (FLIFYSALHFLVLYTYQIPIV) threads the bilayer. Residues 261–303 (HHSWLPTGSFLPRLFGLTVLMDSSCPEWWKFPFVAPDFNDDDL) are Cytoplasmic-facing. Residues 304–324 (IMKWPLYANPIVVLVFFYLTV) form a helical membrane-spanning segment. The Extracellular segment spans residues 325-454 (AQYKFTRNGS…GDKESAASKG (130 aa)). N-linked (GlcNAc...) asparagine glycans are attached at residues Asn332, Asn392, and Asn440. Residues 389–417 (LLSNASSSANDDEQGRARSRSPLRNGEEQ) are disordered. The chain crosses the membrane as a helical span at residues 455 to 475 (MIAVMTFVIFHSYSIALTAMM). Residues 476-478 (TWA) are Cytoplasmic-facing. Residues 479-499 (LLYHSIFGLILLILTCILWIF) form a helical membrane-spanning segment. Residues 500 to 506 (RDTRKSS) are Extracellular-facing. A helical membrane pass occupies residues 507-527 (FAMAPIILMYIEFLLILQYFL). The Cytoplasmic segment spans residues 528–552 (SMDIHAEIGDPAWMNFVGIEWTTLP). The chain crosses the membrane as a helical span at residues 553–573 (VHAVIILCVQTLLTLPVFLLL). Residues 574 to 633 (RLARREKFYESLSDYERQRRINSYGTFGASKTGAGGVAVAKFQDPKSRKFAAFVEYLSNK) lie on the Extracellular side of the membrane. A helical transmembrane segment spans residues 634-654 (VSVYFIFVVSVVLLVVSTCFA). Residues 655-656 (PN) are Cytoplasmic-facing. The helical transmembrane segment at 657–677 (FYNILFFALWALNLIYLKFSF) threads the bilayer. Residues 678-683 (RLYRGL) are Extracellular-facing. Residues 684 to 704 (AYAFWLTLTFYTSIVIIALYI) form a helical membrane-spanning segment. Over 705–739 (YQFPGVSQWIIRNTSLSQEWLNAIGLVDFRAIGES) the chain is Cytoplasmic. A helical transmembrane segment spans residues 740 to 760 (GALFLQLLAPIALFVVTMLQL). The Extracellular segment spans residues 761-832 (KFFHGPWSRA…WRFFEVHISK (72 aa)). The interval 768–798 (SRATSPRRAENDPPTSTTEAAAVASTSGTQG) is disordered. Residues 782-794 (TSTTEAAAVASTS) show a composition bias toward low complexity. N-linked (GlcNAc...) asparagine glycosylation occurs at Asn816. The helical transmembrane segment at 833–853 (IVFVIIAIFIANNINALYIPL) threads the bilayer. Topologically, residues 854 to 874 (VILLSLAICLPSAADGIFSLF) are cytoplasmic. The helical transmembrane segment at 875 to 895 (MCAYLFLVALSKMIYQLDIVP) threads the bilayer. Topologically, residues 896–931 (ELSQIDRGVGADNCSHGNISMPEWFGLKKEVEGTEP) are extracellular. N-linked (GlcNAc...) asparagine glycans are attached at residues Asn908 and Asn913. A helical membrane pass occupies residues 932–952 (IYMLFGVIVSIIALAFQSIVI). Residues 953-990 (YRQRHYRASLGLPESMRAKVFPDFHHSHFDRSLKNAIQ) lie on the Cytoplasmic side of the membrane. The helical transmembrane segment at 991-1011 (FLIDYGFYKFGLEITMIAIGI) threads the bilayer. Residue Asp1012 is a topological domain, extracellular. The chain crosses the membrane as a helical span at residues 1013 to 1033 (IFNRMDALAAIQCFWLVLFAL). Topologically, residues 1034–1041 (NKRVFVRR) are cytoplasmic. The chain crosses the membrane as a helical span at residues 1042–1062 (IWVFYVIYMAILYPLQFFSYV). The Extracellular portion of the chain corresponds to 1063-1096 (GLPPDSCIEYPWSYWIPSYSDDARFNLSYLLNLS). 2 N-linked (GlcNAc...) asparagine glycosylation sites follow: Asn1088 and Asn1094. The helical transmembrane segment at 1097-1117 (IYGVNWPSAYLIGDFFVLLLA) threads the bilayer. Over 1118-1160 (SCQLAVFRREGEDNDSIYNDGNFVIKPENPQYDFIDTKKSYVD) the chain is Cytoplasmic. Residues 1161–1181 (YFKSFVFHYGHWITLMSTLAA) traverse the membrane as a helical segment. At 1182–1187 (GIAGTS) the chain is on the extracellular side. A helical membrane pass occupies residues 1188 to 1210 (LFALGYIIFTLTMLWSGNNLYVM). Residues 1211–1231 (NSTLRSFEHTLKRWNALLGYT) are Cytoplasmic-facing. Residues 1232 to 1252 (LFTITMKVCLQIFGCVFLSWF) form a helical membrane-spanning segment. The Extracellular portion of the chain corresponds to 1253–1299 (DQSGGWGKTLCIVRQLFSITCVNNECHVLKELEDFSKACAVETKEGN). Residues 1300-1320 (IGFDVIALSFLVFQIRIFHSW) traverse the membrane as a helical segment. Residues 1321–1615 (YFQHCMVEYR…VVNCIGAHTD (295 aa)) lie on the Cytoplasmic side of the membrane. Residues 1463–1502 (DTIKDPDSRALIAVSEPEARKPGGTEETDGDEDEDNKDSK) form a disordered region. Residues 1488-1498 (EETDGDEDEDN) show a composition bias toward acidic residues. Residues 1616–1636 (ILCYFFAIMTQVMTGGLITLP) form a helical membrane-spanning segment. At 1637 to 1654 (LPLMSLFWGNLSNPRPSK) the chain is on the extracellular side. N-linked (GlcNAc...) asparagine glycosylation occurs at Asn1646. The chain crosses the membrane as a helical span at residues 1655–1675 (FFWVTMITYTECVIVIKFVCQ). Over 1676–1706 (FAFMPYNSITWRTEHQMDPMSLDKLFGVSQR) the chain is Cytoplasmic. Residues 1707-1727 (DSFALWDIVLLFSLFFHRYML) traverse the membrane as a helical segment. Residues 1728 to 1833 (RKLGLWKDAN…KFRYIRDLYP (106 aa)) lie on the Extracellular side of the membrane. Asn1737 carries N-linked (GlcNAc...) asparagine glycosylation. Residues 1834–1854 (IMFGIDVICFLIMTFGYSAFG) form a helical membrane-spanning segment. Over 1855-1866 (EGGSGNVLDDVK) the chain is Cytoplasmic. A helical membrane pass occupies residues 1867–1887 (ASRIPVTLVVMLVGMTLAIII). Topologically, residues 1888–1900 (DRALYLRKSVVGK) are extracellular. A helical membrane pass occupies residues 1901–1921 (LIYQVLMIAFLHIWVFLVLPN). Topologically, residues 1922 to 1930 (MTRRSAISN) are cytoplasmic. A helical transmembrane segment spans residues 1931–1951 (HVAQALYVIKSCYFLVSAWQI). The Extracellular segment spans residues 1952-2046 (RNGYPELCIG…KGKLVKYMMG (95 aa)). The chain crosses the membrane as a helical span at residues 2047 to 2067 (FPIIIGVVIFIFSPLLLWSLL). At 2068–2346 (NQIGTISMPE…VGFIDRAFPS (279 aa)) the chain is on the cytoplasmic side. Residues 2347-2367 (FLAKVFKGGVIAVYLSVILVV) form a helical membrane-spanning segment. Topologically, residues 2368–2442 (GRGLVRGIFT…WTRMSKKKQE (75 aa)) are extracellular.

This sequence belongs to the PIEZO (TC 1.A.75) family. As to expression, expressed in the pharyngeal-intestinal and spermathecal-uterine valves and in multiple reproductive tissues including the germline, somatic oviduct, and spermatheca. During reproduction, it is expressed in sheath cells, sperm, both spermathecal valves and the spermathecal bag cells.

It localises to the cell membrane. In terms of biological role, pore-forming subunit of a mechanosensitive non-specific cation channel. Generates currents characterized by a linear current-voltage relationship. Plays a role in reproduction by positively regulating inter-tissue signaling to promote oocyte maturation, ovulation and fertilization, and sperm navigation from and to the spermatheca. May play a role in regulating cytosolic and endoplasmic reticulum calcium ion release. The protein is Piezo-type mechanosensitive ion channel component 1 of Caenorhabditis elegans.